A 414-amino-acid chain; its full sequence is CinA-like protein (414 aa).

This sequence belongs to the CinA family.

This is CinA-like protein from Geobacter sp. (strain M21).